Here is a 506-residue protein sequence, read N- to C-terminus: Maturase K (506 aa).

Belongs to the intron maturase 2 family. MatK subfamily.

Its subcellular location is the plastid. The protein resides in the chloroplast. Functionally, usually encoded in the trnK tRNA gene intron. Probably assists in splicing its own and other chloroplast group II introns. The sequence is that of Maturase K from Pisum sativum (Garden pea).